The chain runs to 460 residues: Lipase member I (460 aa).

The signal sequence occupies residues 1–15 (MRVYIFLCLMCWVRS). Asn63 carries N-linked (GlcNAc...) asparagine glycosylation. The active-site Nucleophile is Ser159. The Charge relay system role is filled by Asp183. Residues Cys238 and Cys251 are joined by a disulfide bond. Catalysis depends on His253, which acts as the Charge relay system. 2 cysteine pairs are disulfide-bonded: Cys275-Cys286 and Cys289-Cys297. Asn396 carries an N-linked (GlcNAc...) asparagine glycan. Cys436 and Cys455 are disulfide-bonded.

The protein belongs to the AB hydrolase superfamily. Lipase family. In terms of assembly, interacts with heparin with a high affinity. As to expression, expressed in testis. Expressed exclusively at the connecting piece of the sperm.

The protein resides in the cell membrane. The protein localises to the secreted. The catalysed reaction is 1-hexadecanoyl-2-(9Z-octadecenoyl)-sn-glycero-3-phosphate + H2O = 2-(9Z-octadecenoyl)-sn-glycero-3-phosphate + hexadecanoate + H(+). With respect to regulation, inhibited by sodium vanadate. Its function is as follows. Hydrolyzes specifically phosphatidic acid (PA) to produce 2-acyl lysophosphatidic acid (LPA; a potent bioactive lipid mediator) and fatty acid. Does not hydrolyze other phospholipids, like phosphatidylserine (PS), phosphatidylcholine (PC) and phosphatidylethanolamine (PE) or triacylglycerol (TG). The protein is Lipase member I (LIPI) of Homo sapiens (Human).